A 64-amino-acid chain; its full sequence is Large ribosomal subunit protein bL35 (64 aa).

The protein belongs to the bacterial ribosomal protein bL35 family.

The protein is Large ribosomal subunit protein bL35 of Wolinella succinogenes (strain ATCC 29543 / DSM 1740 / CCUG 13145 / JCM 31913 / LMG 7466 / NCTC 11488 / FDC 602W) (Vibrio succinogenes).